Reading from the N-terminus, the 120-residue chain is uncharacterized protein (120 aa).

This is an uncharacterized protein from Methanocaldococcus jannaschii (strain ATCC 43067 / DSM 2661 / JAL-1 / JCM 10045 / NBRC 100440) (Methanococcus jannaschii).